Consider the following 340-residue polypeptide: Serpentine receptor class alpha-18 (340 aa).

A run of 6 helical transmembrane segments spans residues 29–49 (FNFI…WLAI), 109–129 (VFEL…VFSL), 149–169 (FIAT…FYIV), 198–218 (VRTG…YVCV), 249–269 (ISIV…NLLI), and 285–305 (IVSF…VIYF).

This sequence belongs to the nematode receptor-like protein sra family.

Its subcellular location is the membrane. The sequence is that of Serpentine receptor class alpha-18 (sra-18) from Caenorhabditis elegans.